A 1336-amino-acid polypeptide reads, in one-letter code: MGDPAPARQSDFIFLVALRDPAGIFELVEVVGNGTYGQVYKGRHVKTGQLAAIKVMDVTEDEEEEIKQEINMLKKYSHHRNIATYYGAFIKKSPPGNDDQLWLVMEFCGAGSVTDLVKNTKGNALKEDCIAYICREILRGLAHLHAHKVIHRDIKGQNVLLTENAEVKLVDFGVSAQLDRTVGRRNTFIGTPYWMAPEVIACDENPDATYDYRSDIWSLGITAIEMAEGAPPLCDMHPMRALFLIPRNPPPRLKSKKWSKKFTDFIDTCLIKTYLSRPPTEQLLKFPFIRDQPTERQVRIQLKDHIDRSRKKRGEKEETEYEYSGSEEEDDSHGEEGEPSSIMNVPGESTLRREFLRLQQENKSNSEALKQQQQLQQQQQRDPEAHIKHLLHQRQRRIEEQKEERRRVEEQQRREREQRKLQEKEQQRRLEDMQALRREEERRQAEREQEYKRKQLEEQRQSERLQRQLQQEHAYLNSQKQQQQQQQQQQQQQQQQILPGDRKPLYHYGRGINPADKPAWAREVEERARMNKQQNSPLAKTKPSSAGPEPPIPQASPSPPGPLSQTPPMQRPVEPQEGPHKSLVAHRVPLKPYAAPVPRSQSLQDQPTRNLAAFPASHDPDPAAVPTPTATPSARGAVIRQNSDPTSEGPGPSPNPPSWVRPDNEAPPKVPQRTSSIATALNTSGAGGSRPAQAVRARPRSNSAWQIYLQRRAERGTPKPPGPPAQPPGPPNTSSNPDLRRSDPGWERSDSVLPASHGHLPQAGSLERNRNRVGASTKLDSSPVLSPGNKAKPEDHRSRPGRPADFVLLKERTLDEAPKPPKKAMDYSSSSEEVESSEDEEEEGDGEPSEGSRDTPGGRSDGDTDSVSTMVVHDVEEVSGTQPSYGGGTMVVQRTPEEERSLLLADSNGYTNLPDVVQPSHSPTENSQGQSPPTKDGGGDYQSRGLVKAPGKSSFTMFVDLGIYQPGGSGDTIPITALVGGEGGRLDQLQFDVRKGSVVNVNPTNTRAHSETPEIRKYKKRFNSEILCAALWGVNLLVGTENGLMLLDRSGQGKVYGLIGRRRFQQMDVLEGLNLLITISGKRNKLRVYYLSWLRNKILHNDPEVEKKQGWTTVGDMEGCGHYRVVKYERIKFLVIALKNSVEVYAWAPKPYHKFMAFKSFADLPHRPLLVDLTVEEGQRLKVIYGSSAGFHAVDVDSGNSYDIYIPVHIQSQITPHAIVFLPNTDGMEMLLCYEDEGVYVNTYGRIIKDVVLQWGEMPTSVAYICSNQIMGWGEKAIEIRSVETGHLDGVFMHKRAQRLKFLCERNDKVFFASVRSGGSSQVYFMTLNRNCIMNW.

The region spanning 25-289 (FELVEVVGNG…TEQLLKFPFI (265 aa)) is the Protein kinase domain. ATP-binding positions include 31-39 (VGNGTYGQV) and Lys54. Catalysis depends on Asp153, which acts as the Proton acceptor. Disordered stretches follow at residues 299–347 (RIQL…NVPG), 363–383 (KSNS…QRDP), and 395–890 (QRRI…GGTM). Residues 317 to 333 (EETEYEYSGSEEEDDSH) are compositionally biased toward acidic residues. 2 positions are modified to phosphoserine: Ser324 and Ser326. The segment covering 371–380 (QQQQLQQQQQ) has biased composition (low complexity). A compositionally biased stretch (basic and acidic residues) spans 396-466 (RRIEEQKEER…EEQRQSERLQ (71 aa)). Residues 479 to 496 (QKQQQQQQQQQQQQQQQQ) are compositionally biased toward low complexity. Omega-N-methylarginine occurs at positions 502 and 510. Residues 519–529 (AWAREVEERAR) are compositionally biased toward basic and acidic residues. Polar residues predominate over residues 531-544 (NKQQNSPLAKTKPS). Pro residues predominate over residues 548–562 (PEPPIPQASPSPPGP). Residues 599 to 609 (RSQSLQDQPTR) show a composition bias toward polar residues. Residues 622–632 (PAAVPTPTATP) show a composition bias toward low complexity. Ser643 carries the phosphoserine modification. Positions 672–684 (QRTSSIATALNTS) are enriched in polar residues. Ser703 carries the post-translational modification Phosphoserine. The span at 718–731 (PKPPGPPAQPPGPP) shows a compositional bias: pro residues. The span at 738–750 (DLRRSDPGWERSD) shows a compositional bias: basic and acidic residues. Residues Ser756, Ser765, Ser781, Ser782, and Ser786 each carry the phosphoserine modification. Residues 808–825 (LLKERTLDEAPKPPKKAM) are compositionally biased toward basic and acidic residues. A compositionally biased stretch (acidic residues) spans 832-848 (EEVESSEDEEEEGDGEP). The interval 870–1336 (MVVHDVEEVS…TLNRNCIMNW (467 aa)) is mediates interaction with RAP2A. The residue at position 895 (Thr895) is a Phosphothreonine. The interval 909 to 946 (GYTNLPDVVQPSHSPTENSQGQSPPTKDGGGDYQSRGL) is disordered. Positions 919-933 (PSHSPTENSQGQSPP) are enriched in polar residues. Residues 1023 to 1310 (NSEILCAALW…KFLCERNDKV (288 aa)) form the CNH domain.

It belongs to the protein kinase superfamily. STE Ser/Thr protein kinase family. STE20 subfamily. In terms of assembly, interacts with RAP2A and NCK1. Interacts with TANC1. It depends on Mg(2+) as a cofactor. Autophosphorylated.

It localises to the cytoplasm. The protein resides in the postsynaptic density. It is found in the cell projection. Its subcellular location is the axon. The protein localises to the dendrite. The enzyme catalyses L-seryl-[protein] + ATP = O-phospho-L-seryl-[protein] + ADP + H(+). The catalysed reaction is L-threonyl-[protein] + ATP = O-phospho-L-threonyl-[protein] + ADP + H(+). In terms of biological role, serine/threonine kinase which acts as a negative regulator of Ras-related Rap2-mediated signal transduction to control neuronal structure and AMPA receptor trafficking. Required for normal synaptic density, dendrite complexity, as well as surface AMPA receptor expression in hippocampal neurons. Can activate the JNK and MAPK14/p38 pathways and mediates stimulation of the stress-activated protein kinase MAPK14/p38 MAPK downstream of the Raf/ERK pathway. Phosphorylates TANC1 upon stimulation by RAP2A, MBP and SMAD1. Has an essential function in negative selection of thymocytes, perhaps by coupling NCK1 to activation of JNK1. Activator of the Hippo signaling pathway which plays a pivotal role in organ size control and tumor suppression by restricting proliferation and promoting apoptosis. MAP4Ks act in parallel to and are partially redundant with STK3/MST2 and STK4/MST2 in the phosphorylation and activation of LATS1/2, and establish MAP4Ks as components of the expanded Hippo pathway. The protein is Misshapen-like kinase 1 (Mink1) of Rattus norvegicus (Rat).